A 296-amino-acid polypeptide reads, in one-letter code: MAWVQLRLNSTNEKAEKISEYLEEIGAVSVTFMDSQDTPIFEPLPGETRLWGNTDVIALFDAETNMQQIVRLLQQKNHLDENTAYKIEQIEDKDWEREWMDNFHPMKFGKRLWICPSWREIPDENAINVMLDPGLAFGTGTHPTTALCLEWLDSLDLTGKTVIDFGCGSGILAIAALKLGAKSAVGIDIDPQAILASYNNAEQNGVAERLQLFLSEEKPTDLQADVVIANILAGPLKELYPIISNLVKPQGDLGLSGILSTQADSVCEAYQGKFTLDPITEREEWCRITGKLNSFV.

4 residues coordinate S-adenosyl-L-methionine: threonine 145, glycine 166, aspartate 188, and asparagine 230.

It belongs to the methyltransferase superfamily. PrmA family.

It localises to the cytoplasm. The enzyme catalyses L-lysyl-[protein] + 3 S-adenosyl-L-methionine = N(6),N(6),N(6)-trimethyl-L-lysyl-[protein] + 3 S-adenosyl-L-homocysteine + 3 H(+). Methylates ribosomal protein L11. The chain is Ribosomal protein L11 methyltransferase from Histophilus somni (strain 129Pt) (Haemophilus somnus).